Consider the following 192-residue polypeptide: Phosphoheptose isomerase (192 aa).

The SIS domain maps to 37–192; it reads LADSFKAGGK…IQLIEKEMVK (156 aa). 52–54 contributes to the substrate binding site; sequence NGG. Zn(2+) is bound by residues His61 and Glu65. Substrate is bound by residues Glu65, 93 to 94, 119 to 121, Ser124, and Gln172; these read ND and STS. 2 residues coordinate Zn(2+): Gln172 and His180.

It belongs to the SIS family. GmhA subfamily. Homotetramer. It depends on Zn(2+) as a cofactor.

It is found in the cytoplasm. The catalysed reaction is 2 D-sedoheptulose 7-phosphate = D-glycero-alpha-D-manno-heptose 7-phosphate + D-glycero-beta-D-manno-heptose 7-phosphate. It functions in the pathway carbohydrate biosynthesis; D-glycero-D-manno-heptose 7-phosphate biosynthesis; D-glycero-alpha-D-manno-heptose 7-phosphate and D-glycero-beta-D-manno-heptose 7-phosphate from sedoheptulose 7-phosphate: step 1/1. Catalyzes the isomerization of sedoheptulose 7-phosphate in D-glycero-D-manno-heptose 7-phosphate. In Enterobacter sp. (strain 638), this protein is Phosphoheptose isomerase.